Reading from the N-terminus, the 155-residue chain is uncharacterized protein (155 aa).

The interval 56–79 is disordered; the sequence is GEKRPTHRRPYRRTKPYPKRPSML. Residues 60–73 are compositionally biased toward basic residues; sequence PTHRRPYRRTKPYP.

This is an uncharacterized protein from Sinorhizobium fredii (strain NBRC 101917 / NGR234).